A 732-amino-acid polypeptide reads, in one-letter code: Catalase-peroxidase (732 aa).

Residues 1–15 (MSTESKCPFAGGAYA) form the signal peptide. The segment at residues 96-219 (WHSAGTYRIY…LGAVQMGLIY (124 aa)) is a cross-link (tryptophyl-tyrosyl-methioninium (Trp-Tyr) (with M-245)). The Proton acceptor role is filled by His97. The tryptophyl-tyrosyl-methioninium (Tyr-Met) (with W-96) cross-link spans 219–245 (YVNPEGPNGNPDPLASARDIRETFARM). A heme b-binding site is contributed by His260.

This sequence belongs to the peroxidase family. Peroxidase/catalase subfamily. As to quaternary structure, homodimer or homotetramer. Heme b is required as a cofactor. Formation of the three residue Trp-Tyr-Met cross-link is important for the catalase, but not the peroxidase activity of the enzyme.

The catalysed reaction is H2O2 + AH2 = A + 2 H2O. The enzyme catalyses 2 H2O2 = O2 + 2 H2O. In terms of biological role, bifunctional enzyme with both catalase and broad-spectrum peroxidase activity. The protein is Catalase-peroxidase of Acidobacterium capsulatum (strain ATCC 51196 / DSM 11244 / BCRC 80197 / JCM 7670 / NBRC 15755 / NCIMB 13165 / 161).